A 398-amino-acid polypeptide reads, in one-letter code: MAKISDLSDELLVKILSFLPTKEAVSTSCLSKQWEFLWMWLSKLEFYFSDGSESACLRDFIAKNLPLHKAPIIESLRFCSFFGSLQPKDLKSWVRIAVSRCVRELSISLHDTTAAVSLPSSLYTCKSLVTLKLYGKKVLLDVPRTVFLPSLKTLQLERLRYSDEDSLRLLLSYCPVLEDLSIVREDYDNLRALVVIVPSLQRLSLEIPGNCSSDGYVIVTPSLKYFKVVDYRESMSYLIEQMPELEEADIVVLQYPEKLLESVTFFKRLSIRVIFNTYTETVYRDGIVFNRLENLKLCICNGDWSKLLIQFLKDSPNLRVLNLLVDDYPSSLGDYEPVRWKNNKSSVPKCLLESLETFEFAGYIGTPEERDFLSYIFKHARCLKSSSILSRPERYHGI.

An F-box domain is found at 1–47; the sequence is MAKISDLSDELLVKILSFLPTKEAVSTSCLSKQWEFLWMWLSKLEFY. In terms of domain architecture, FBD spans 340-388; it reads WKNNKSSVPKCLLESLETFEFAGYIGTPEERDFLSYIFKHARCLKSSSI.

This chain is Putative FBD-associated F-box protein At5g56700, found in Arabidopsis thaliana (Mouse-ear cress).